The chain runs to 936 residues: Intimin (936 aa).

The first 41 residues, 1 to 41 (MIIHGFCTGTRHKHKLRKTFIMLGAGLGLFFSVNQNSFANG), serve as a signal peptide directing secretion. Positions 63–112 (LFYTLKTGESVAQLSKSQGISVPVIWSLNKHLYSSESEMMKASPGQQIIL) constitute a LysM domain. 2 Big-1 domains span residues 557–650 (ITNF…VIFV) and 657–748 (ITEI…VEFF). Positions 780–831 (KLQATGGNGKYTWKSSNTKIASVDNSGVITLNEKGSATITVVSGDNQSATYT) constitute a BIG2 domain. Cysteine 857 and cysteine 934 are joined by a disulfide.

It belongs to the intimin/invasin family.

Its subcellular location is the cell outer membrane. In terms of biological role, an inverse autotransporter. The protein is Intimin (eae) of Citrobacter freundii.